A 501-amino-acid polypeptide reads, in one-letter code: Putative antiporter subunit mnhD2 (501 aa).

Helical transmembrane passes span 4–24 (SNLL…LVFI), 33–53 (IFSI…LIYV), 79–99 (LSLL…AYGF), 109–129 (YYLP…FLTA), 131–151 (LFNI…LITL), 162–182 (IIYV…VGLL), 207–227 (IVIV…LVLF), 245–265 (FAAL…TLIF), 274–294 (PLLV…VLAY), 309–329 (IGFI…GAIF), 334–354 (DIVV…ITGL), 369–389 (FFGV…PFSG), 409–429 (LALM…IFFV), and 452–472 (NLIG…PLLF).

Belongs to the CPA3 antiporters (TC 2.A.63) subunit D family. May form a heterooligomeric complex that consists of seven subunits: mnhA2, mnhB2, mnhC2, mnhD2, mnhE2, mnhF2 and mnhG2.

It is found in the cell membrane. The polypeptide is Putative antiporter subunit mnhD2 (mnhD2) (Staphylococcus saprophyticus subsp. saprophyticus (strain ATCC 15305 / DSM 20229 / NCIMB 8711 / NCTC 7292 / S-41)).